A 194-amino-acid polypeptide reads, in one-letter code: Thymidine kinase (194 aa).

ATP contacts are provided by residues 15–22 (GSMFSGKS) and 88–91 (DEVQ). Catalysis depends on glutamate 89, which acts as the Proton acceptor. The Zn(2+) site is built by cysteine 145, cysteine 148, cysteine 183, and histidine 186.

The protein belongs to the thymidine kinase family. Homotetramer.

It localises to the cytoplasm. It carries out the reaction thymidine + ATP = dTMP + ADP + H(+). This Bacillus velezensis (strain DSM 23117 / BGSC 10A6 / LMG 26770 / FZB42) (Bacillus amyloliquefaciens subsp. plantarum) protein is Thymidine kinase.